The primary structure comprises 346 residues: Protein RecA (346 aa).

Gly65–Thr72 serves as a coordination point for ATP.

It belongs to the RecA family.

It localises to the cytoplasm. Functionally, can catalyze the hydrolysis of ATP in the presence of single-stranded DNA, the ATP-dependent uptake of single-stranded DNA by duplex DNA, and the ATP-dependent hybridization of homologous single-stranded DNAs. It interacts with LexA causing its activation and leading to its autocatalytic cleavage. In Enterococcus hirae (strain ATCC 9790 / DSM 20160 / JCM 8729 / LMG 6399 / NBRC 3181 / NCIMB 6459 / NCDO 1258 / NCTC 12367 / WDCM 00089 / R), this protein is Protein RecA.